The following is a 623-amino-acid chain: EIN3-binding F-box protein 2 (623 aa).

Positions 52–106 (QTSIDVLPEECLFEILRRLPSGQERSACACVSKHWLNLLSSISRSEVNESSVQDV) constitute an F-box domain. 18 LRR repeats span residues 119–147 (GKKA…QIRG), 151–176 (ESKV…SLWN), 177–202 (LPAV…DLSR), 203–228 (CPGI…TIDS), 229–254 (CSGV…SIRS), 255–281 (CPRI…KLQM), 307–334 (LQGV…SVMS), 335–360 (CRGM…SLNK), 361–386 (CLLV…KLEE), 387–413 (CHRI…SLAN), 414–441 (CLGI…SIRC), 442–467 (CPGF…ELCG), 468–494 (LNGV…NLSE), 495–521 (CINV…NLDG), 522–547 (CKNI…DISN), 548–574 (TLVS…SIGG), 575–600 (CSSI…NIQR), and 601–623 (CGRI…DILY).

In terms of assembly, part of a SCF (SKP1-cullin-F-box) protein ligase complex. Interacts with CUL1, SKP1A/ASK1, SKP1B/ASK2, EIN3, and EIL1. In terms of tissue distribution, ubiquitous.

It localises to the nucleus. It participates in protein modification; protein ubiquitination. Functionally, component of SCF(EBF1) E3 ubiquitin ligase complexes, which may mediate the ubiquitination and subsequent proteasomal degradation of target proteins (probably including EIN3 and EIL1). Regulator of the ethylene signaling cascade by modulating the stability of EIN3 and EIL1 proteins. This Arabidopsis thaliana (Mouse-ear cress) protein is EIN3-binding F-box protein 2 (EBF2).